The following is a 117-amino-acid chain: Large ribosomal subunit protein uL18 (117 aa).

The protein belongs to the universal ribosomal protein uL18 family. In terms of assembly, part of the 50S ribosomal subunit; part of the 5S rRNA/L5/L18/L25 subcomplex. Contacts the 5S and 23S rRNAs.

Functionally, this is one of the proteins that bind and probably mediate the attachment of the 5S RNA into the large ribosomal subunit, where it forms part of the central protuberance. In Sphingopyxis alaskensis (strain DSM 13593 / LMG 18877 / RB2256) (Sphingomonas alaskensis), this protein is Large ribosomal subunit protein uL18.